Reading from the N-terminus, the 461-residue chain is Ribitol-5-phosphate transferase FKTN (461 aa).

The Cytoplasmic portion of the chain corresponds to 1 to 7 (MSRINKN). Residues 6-27 (KNVVLALLTLTSSAFLLFQLYY) form a required and sufficient for interaction with POMGNT1 region. Residues 8 to 28 (VVLALLTLTSSAFLLFQLYYY) traverse the membrane as a helical; Signal-anchor for type II membrane protein segment. The Lumenal segment spans residues 29–461 (KHYLSARNGP…SEWDEVIQLY (433 aa)). The N-linked (GlcNAc...) asparagine glycan is linked to asparagine 92.

This sequence belongs to the LicD transferase family. In terms of assembly, forms a complex composed of FKTN/fukutin, FKRP and RXYLT1/TMEM5. Interacts (via transmembrane domain) with POMGNT1; the interaction is direct and is required for normal POMGNT1 location in Golgi membranes. In terms of tissue distribution, expressed in the retina, with highest levels found in the inner segments of photoreceptors and the outer plexiform layer (at protein level). Expressed at lower levels in the inner and outer nuclear layers, the inner plexiform layers, and the ganglion cell layers of the retina (at protein level). Expressed in the heart, brain, spleen, lung, liver, skeletal muscle, kidney and testis.

The protein localises to the golgi apparatus membrane. It localises to the cytoplasm. The protein resides in the nucleus. It is found in the endoplasmic reticulum. It carries out the reaction 3-O-[beta-D-GalNAc-(1-&gt;3)-beta-D-GlcNAc-(1-&gt;4)-(O-6-P-alpha-D-Man)]-Thr-[protein] + CDP-L-ribitol = 3-O-[Rib-ol-P-3-beta-D-GalNAc-(1-&gt;3)-beta-D-GlcNAc-(1-&gt;4)-(O-6-P-alpha-D-Man)]-Thr-[protein] + CMP + H(+). The protein operates within protein modification; protein glycosylation. Its function is as follows. Catalyzes the transfer of CDP-ribitol to the distal N-acetylgalactosamine of the phosphorylated O-mannosyl trisaccharide (N-acetylgalactosamine-beta-3-N-acetylglucosamine-beta-4-(phosphate-6-)mannose), a carbohydrate structure present in alpha-dystroglycan (DAG1). This constitutes the first step in the formation of the ribitol 5-phosphate tandem repeat which links the phosphorylated O-mannosyl trisaccharide to the ligand binding moiety composed of repeats of 3-xylosyl-alpha-1,3-glucuronic acid-beta-1. Required for normal location of POMGNT1 in Golgi membranes, and for normal POMGNT1 activity. May interact with and reinforce a large complex encompassing the outside and inside of muscle membranes. Could be involved in brain development. The sequence is that of Ribitol-5-phosphate transferase FKTN from Mus musculus (Mouse).